A 445-amino-acid chain; its full sequence is Potassium/proton antiporter CemA (445 aa).

4 consecutive transmembrane segments (helical) span residues 44 to 64 (MQVSVVTFLTLVLVPLGVNIC), 330 to 350 (ALTCITITFLFFGLKVQILIL), 368 to 388 (LIIIIVTDLLVGYHSPQGWKL), and 405 to 425 (FILCFIGTFPVILDTIFKYWI).

It belongs to the CemA family.

It is found in the plastid. The protein localises to the chloroplast inner membrane. The enzyme catalyses K(+)(in) + H(+)(out) = K(+)(out) + H(+)(in). Contributes to K(+)/H(+) antiport activity by supporting proton efflux to control proton extrusion and homeostasis in chloroplasts in a light-dependent manner to modulate photosynthesis. Prevents excessive induction of non-photochemical quenching (NPQ) under continuous-light conditions. Indirectly promotes efficient inorganic carbon uptake into chloroplasts. The chain is Potassium/proton antiporter CemA from Pleurastrum terricola (Filamentous green alga).